We begin with the raw amino-acid sequence, 428 residues long: Enolase (428 aa).

Position 163 (Q163) interacts with (2R)-2-phosphoglycerate. E205 functions as the Proton donor in the catalytic mechanism. Residues D242, E286, and D313 each contribute to the Mg(2+) site. Positions 338, 367, 368, and 389 each coordinate (2R)-2-phosphoglycerate. K338 serves as the catalytic Proton acceptor.

Belongs to the enolase family. The cofactor is Mg(2+).

Its subcellular location is the cytoplasm. It is found in the secreted. The protein resides in the cell surface. It catalyses the reaction (2R)-2-phosphoglycerate = phosphoenolpyruvate + H2O. It functions in the pathway carbohydrate degradation; glycolysis; pyruvate from D-glyceraldehyde 3-phosphate: step 4/5. Functionally, catalyzes the reversible conversion of 2-phosphoglycerate (2-PG) into phosphoenolpyruvate (PEP). It is essential for the degradation of carbohydrates via glycolysis. This Bordetella avium (strain 197N) protein is Enolase.